We begin with the raw amino-acid sequence, 179 residues long: Inosine/xanthosine triphosphatase (179 aa).

Mg(2+) is bound at residue E71. 71–72 contacts substrate; it reads EA.

The protein belongs to the YjjX NTPase family. Homodimer. It depends on Mg(2+) as a cofactor. Requires Mn(2+) as cofactor.

The enzyme catalyses XTP + H2O = XDP + phosphate + H(+). The catalysed reaction is ITP + H2O = IDP + phosphate + H(+). In terms of biological role, phosphatase that hydrolyzes non-canonical purine nucleotides such as XTP and ITP to their respective diphosphate derivatives. Probably excludes non-canonical purines from DNA/RNA precursor pool, thus preventing their incorporation into DNA/RNA and avoiding chromosomal lesions. This is Inosine/xanthosine triphosphatase from Shewanella oneidensis (strain ATCC 700550 / JCM 31522 / CIP 106686 / LMG 19005 / NCIMB 14063 / MR-1).